The following is an 84-amino-acid chain: uncharacterized protein (84 aa).

An LITAF domain is found at 1–83 (MDDKFTTLPC…CKQAVFVYKI (83 aa)). Positions 21 and 24 each coordinate Zn(2+). The tract at residues 39–61 (MSWVVCTAITLACLPCCCIPFLC) is membrane-binding amphipathic helix. Zn(2+)-binding residues include C71 and C74.

The protein localises to the host membrane. This is an uncharacterized protein from Dryophytes versicolor (chameleon treefrog).